A 420-amino-acid polypeptide reads, in one-letter code: MKFTNLTAKEFGAFTDSMPYSHFTQTVGHYELKLAEGYETHLVGIKNNNNEVIAACLLTAVPVMKVFKYFYSNRGPVIDYENQELVHFFFNELSKYVKKHRCLYLHIDPYLPYQYLNHDGEITGNAGNDWFFDKMSNLGFEHTGFHKGFDPVLQIRYHSVLDLKDKTADDIIKNMDGLRKRNTKKVKKNGVKVRYLSEEELPIFRSFMEDTSESKAFADRDDKFYYNRLKYYKERVLVPLAYINFDEYIKELNEERDILNKDLNKALKDIEKRPENKKAHNKRDNLQQQLDANEQKIEEGKRLQEEHGNELPISAGFFFINPFEVVYYAGGTSNAFRHFAGSYAVQWEMINYALNHGIDRYNFYGVSGKFTEDAEDAGVVKFKKGYNAEIIEYVGDFIKPINKPVYAAYTALKKVKDRIF.

This sequence belongs to the FemABX family. Homodimer. Interacts with FemB.

Its subcellular location is the cytoplasm. It catalyses the reaction beta-D-GlcNAc-(1-&gt;4)-Mur2Ac(oyl-L-Ala-D-isoglutaminyl-L-Lys-(N(6)-Gly)-D-Ala-D-Ala)-di-trans,octa-cis-undecaprenyl diphosphate + 2 glycyl-tRNA(Gly) = MurNAc-L-Ala-D-isoglutaminyl-L-Lys-(N(6)-tri-Gly)-D-Ala-D-Ala-diphospho-di-trans,octa-cis-undecaprenyl-GlcNAc + 2 tRNA(Gly) + 2 H(+). In terms of biological role, catalyzes the formation of the pentaglycine interpeptide bridge, which is characteristic of the S.aureus peptidoglycan. Adds glycines 2 and 3 of the pentaglycine bridge, using glycyl-tRNA(Gly) as donor. Involved in resistance to methicillin. In Staphylococcus aureus (strain MRSA252), this protein is Aminoacyltransferase FemA (femA).